The chain runs to 102 residues: uncharacterized protein (102 aa).

This is an uncharacterized protein from Haemophilus influenzae (strain ATCC 51907 / DSM 11121 / KW20 / Rd).